The chain runs to 96 residues: Toxin ParE1 (96 aa).

Belongs to the RelE toxin family. Forms a ParD1(2)-ParE1(2) heterotetramer.

Its function is as follows. Toxic component of a type II toxin-antitoxin (TA) system. Its toxic effect is neutralized by coexpression with cognate antitoxin ParD1 but no other ParD or RelB antitoxin. Low levels of wild-type toxin in the absence of antitoxin decreases the rate of cell growth, and results in death or loss of colony formation abilities and greatly elongated cells. Low levels of a mutant missing the last 4 residues leads to loss of cell division while cell elongation continues. This Caulobacter vibrioides (strain ATCC 19089 / CIP 103742 / CB 15) (Caulobacter crescentus) protein is Toxin ParE1 (parE1).